The sequence spans 357 residues: Holliday junction branch migration complex subunit RuvB (357 aa).

Residues Met-1 to Pro-15 show a composition bias toward low complexity. Residues Met-1 to Ile-30 form a disordered region. A large ATPase domain (RuvB-L) region spans residues Asp-13–Tyr-195. ATP is bound by residues Leu-34, Arg-35, Gly-76, Lys-79, Thr-80, Thr-81, Glu-142–Phe-144, Arg-185, Tyr-195, and Arg-232. Thr-80 is a binding site for Mg(2+). A small ATPAse domain (RuvB-S) region spans residues Asn-196 to Asp-266. The segment at Pro-269–Lys-357 is head domain (RuvB-H). DNA-binding residues include Arg-305, Arg-324, and Arg-329.

Belongs to the RuvB family. As to quaternary structure, homohexamer. Forms an RuvA(8)-RuvB(12)-Holliday junction (HJ) complex. HJ DNA is sandwiched between 2 RuvA tetramers; dsDNA enters through RuvA and exits via RuvB. An RuvB hexamer assembles on each DNA strand where it exits the tetramer. Each RuvB hexamer is contacted by two RuvA subunits (via domain III) on 2 adjacent RuvB subunits; this complex drives branch migration. In the full resolvosome a probable DNA-RuvA(4)-RuvB(12)-RuvC(2) complex forms which resolves the HJ.

The protein localises to the cytoplasm. The enzyme catalyses ATP + H2O = ADP + phosphate + H(+). Its function is as follows. The RuvA-RuvB-RuvC complex processes Holliday junction (HJ) DNA during genetic recombination and DNA repair, while the RuvA-RuvB complex plays an important role in the rescue of blocked DNA replication forks via replication fork reversal (RFR). RuvA specifically binds to HJ cruciform DNA, conferring on it an open structure. The RuvB hexamer acts as an ATP-dependent pump, pulling dsDNA into and through the RuvAB complex. RuvB forms 2 homohexamers on either side of HJ DNA bound by 1 or 2 RuvA tetramers; 4 subunits per hexamer contact DNA at a time. Coordinated motions by a converter formed by DNA-disengaged RuvB subunits stimulates ATP hydrolysis and nucleotide exchange. Immobilization of the converter enables RuvB to convert the ATP-contained energy into a lever motion, pulling 2 nucleotides of DNA out of the RuvA tetramer per ATP hydrolyzed, thus driving DNA branch migration. The RuvB motors rotate together with the DNA substrate, which together with the progressing nucleotide cycle form the mechanistic basis for DNA recombination by continuous HJ branch migration. Branch migration allows RuvC to scan DNA until it finds its consensus sequence, where it cleaves and resolves cruciform DNA. The polypeptide is Holliday junction branch migration complex subunit RuvB (Bordetella parapertussis (strain 12822 / ATCC BAA-587 / NCTC 13253)).